We begin with the raw amino-acid sequence, 596 residues long: Membrane protein insertase YidC (596 aa).

6 consecutive transmembrane segments (helical) span residues 4–24, 332–352, 359–379, 425–445, 468–488, and 518–538; these read NKLI…HFFD, LGWP…FSFI, YGLV…PLSY, LSGC…FNFF, IINL…FTLL, and PITF…YYFV. Residues 565-584 show a composition bias toward basic and acidic residues; sequence KNKEKSANNKEGSFKKRFQD. The interval 565 to 596 is disordered; that stretch reads KNKEKSANNKEGSFKKRFQDAIKASASHKGKK.

This sequence belongs to the OXA1/ALB3/YidC family. Type 1 subfamily. Interacts with the Sec translocase complex via SecD. Specifically interacts with transmembrane segments of nascent integral membrane proteins during membrane integration.

Its subcellular location is the cell inner membrane. Required for the insertion and/or proper folding and/or complex formation of integral membrane proteins into the membrane. Involved in integration of membrane proteins that insert both dependently and independently of the Sec translocase complex, as well as at least some lipoproteins. Aids folding of multispanning membrane proteins. The sequence is that of Membrane protein insertase YidC from Amoebophilus asiaticus (strain 5a2).